A 254-amino-acid chain; its full sequence is Phosphoribosylaminoimidazole-succinocarboxamide synthase (254 aa).

Belongs to the SAICAR synthetase family.

It carries out the reaction 5-amino-1-(5-phospho-D-ribosyl)imidazole-4-carboxylate + L-aspartate + ATP = (2S)-2-[5-amino-1-(5-phospho-beta-D-ribosyl)imidazole-4-carboxamido]succinate + ADP + phosphate + 2 H(+). It participates in purine metabolism; IMP biosynthesis via de novo pathway; 5-amino-1-(5-phospho-D-ribosyl)imidazole-4-carboxamide from 5-amino-1-(5-phospho-D-ribosyl)imidazole-4-carboxylate: step 1/2. This is Phosphoribosylaminoimidazole-succinocarboxamide synthase from Brucella canis (strain ATCC 23365 / NCTC 10854 / RM-666).